The primary structure comprises 490 residues: JNK-interacting protein 1 (490 aa).

2 disordered regions span residues 1–71 (MADS…DHEP) and 213–254 (EDSS…PVSQ). Residues 231-249 (GHSTAHSPNDFKSMSPQIT) are compositionally biased toward polar residues. The region spanning 271–332 (MLEATHRGLH…PSAYAVDLDY (62 aa)) is the SH3 domain. The PID domain occupies 344–479 (KERYLLGYLG…FQRFYQKFIE (136 aa)).

This sequence belongs to the JIP scaffold family. As to quaternary structure, forms homo- and heterooligomeric complexes. Binds Hep, a dual specificity protein kinase in the JNK pathway, but not its downstream target bsk. The C-terminal region interacts with the kinesin light chain protein, Klc, and the C-terminal PTY motif of amyloid-beta protein precursor-like protein, Appl. Expressed in the brain, CNS, PNS and cells posterior to the morphogenetic furrow in the eye imaginal disk of late embryos.

The protein localises to the cytoplasm. The JNK-interacting protein (JIP) group of scaffold proteins selectively mediates JNK signaling by aggregating specific components of the MAPK cascade to form a functional JNK signaling module. May function as a regulator of vesicle transport, through interactions with the JNK-signaling components and motor proteins. This is JNK-interacting protein 1 (Aplip1) from Drosophila melanogaster (Fruit fly).